We begin with the raw amino-acid sequence, 110 residues long: Acylphosphatase (110 aa).

The 87-residue stretch at R24–R110 folds into the Acylphosphatase-like domain. Catalysis depends on residues R39 and N57.

The protein belongs to the acylphosphatase family.

The enzyme catalyses an acyl phosphate + H2O = a carboxylate + phosphate + H(+). The chain is Acylphosphatase (acyP) from Rubrobacter xylanophilus (strain DSM 9941 / JCM 11954 / NBRC 16129 / PRD-1).